A 464-amino-acid polypeptide reads, in one-letter code: Plant intracellular Ras-group-related LRR protein 3 (464 aa).

The stretch at 106 to 138 (AAVVSLEEVHEGYEKQLRDLEEEIGRVYASAVE) forms a coiled coil. LRR repeat units follow at residues 160 to 183 (GGVV…LGKI), 184 to 206 (VGLV…ISGL), 207 to 230 (EKLE…GLLL), 232 to 252 (LRIL…IAQC), 254 to 275 (SLVE…FGYG), 276 to 299 (LLNL…ICEM), 301 to 322 (SLRY…IGRL), 323 to 347 (TNLE…ISDL), 348 to 370 (ANLR…FFRL), and 372 to 393 (KLEK…MVNQ). The GVYW; degenerate signature appears at 398–406 (VREFMRKRW).

The protein belongs to the SHOC2 family. Widely expressed.

Its function is as follows. Leucine-rich repeat protein that likely mediates protein interactions, possibly in the context of signal transduction. The chain is Plant intracellular Ras-group-related LRR protein 3 (PIRL3) from Arabidopsis thaliana (Mouse-ear cress).